The primary structure comprises 630 residues: Cytochrome B pre-mRNA-processing protein 2 (630 aa).

The protein resides in the mitochondrion. Appears to be specifically required for the splicing of the terminal intron (bI5) of the cytochrome b pre-mRNA. Can also stimulates the splicing of the omega intron of the precursor of large ribosomal RNA. The polypeptide is Cytochrome B pre-mRNA-processing protein 2 (CBP2) (Saccharomyces cerevisiae (strain ATCC 204508 / S288c) (Baker's yeast)).